Consider the following 100-residue polypeptide: Aspartyl/glutamyl-tRNA(Asn/Gln) amidotransferase subunit C (100 aa).

Belongs to the GatC family. Heterotrimer of A, B and C subunits.

The catalysed reaction is L-glutamyl-tRNA(Gln) + L-glutamine + ATP + H2O = L-glutaminyl-tRNA(Gln) + L-glutamate + ADP + phosphate + H(+). It catalyses the reaction L-aspartyl-tRNA(Asn) + L-glutamine + ATP + H2O = L-asparaginyl-tRNA(Asn) + L-glutamate + ADP + phosphate + 2 H(+). Its function is as follows. Allows the formation of correctly charged Asn-tRNA(Asn) or Gln-tRNA(Gln) through the transamidation of misacylated Asp-tRNA(Asn) or Glu-tRNA(Gln) in organisms which lack either or both of asparaginyl-tRNA or glutaminyl-tRNA synthetases. The reaction takes place in the presence of glutamine and ATP through an activated phospho-Asp-tRNA(Asn) or phospho-Glu-tRNA(Gln). The chain is Aspartyl/glutamyl-tRNA(Asn/Gln) amidotransferase subunit C from Rickettsia bellii (strain OSU 85-389).